The following is a 116-amino-acid chain: Large ribosomal subunit protein bL17 (116 aa).

Belongs to the bacterial ribosomal protein bL17 family. In terms of assembly, part of the 50S ribosomal subunit. Contacts protein L32.

The polypeptide is Large ribosomal subunit protein bL17 (Synechocystis sp. (strain ATCC 27184 / PCC 6803 / Kazusa)).